The primary structure comprises 172 residues: RNA silencing suppressor p19 (172 aa).

Basic and acidic residues predominate over residues 1–20 (MERAIQGNDAREQANSERWD). The disordered stretch occupies residues 1–37 (MERAIQGNDAREQANSERWDGGSGGTTSPFKLPDESP).

The protein belongs to the tombusvirus protein p19 family. As to quaternary structure, homodimer.

In terms of biological role, viral suppressor of RNA silencing which binds specifically to silencing RNAs (siRNAs). Acts as a molecular caliper to specifically select siRNAs based on the length of the duplex region of the RNA. The chain is RNA silencing suppressor p19 from Tomato bushy stunt virus (strain Ja6) (TBSV).